A 468-amino-acid chain; its full sequence is Uronate isomerase (468 aa).

The protein belongs to the metallo-dependent hydrolases superfamily. Uronate isomerase family.

It catalyses the reaction D-glucuronate = D-fructuronate. The catalysed reaction is aldehydo-D-galacturonate = keto-D-tagaturonate. Its pathway is carbohydrate metabolism; pentose and glucuronate interconversion. This Brachyspira hyodysenteriae (strain ATCC 49526 / WA1) protein is Uronate isomerase.